A 444-amino-acid polypeptide reads, in one-letter code: Cadaverine/lysine antiporter (444 aa).

A run of 12 helical transmembrane segments spans residues 7 to 27 (IGLF…GIAL), 35 to 55 (IGGI…SLAY), 95 to 115 (IGNL…FPVL), 123 to 143 (IACI…GTWV), 149 to 169 (IGLV…WHWF), 193 to 213 (ILLC…TGMV), 222 to 242 (LATM…TQVL), 273 to 293 (LVSA…MMLV), 323 to 343 (LLLA…MNSA), 354 to 374 (LTGI…VDLI), 384 to 404 (FVSL…LMGA), and 405 to 425 (SSFE…FYAR).

It belongs to the amino acid-polyamine-organocation (APC) superfamily. Basic amino acid/polyamine antiporter (APA) (TC 2.A.3.2) family.

Its subcellular location is the cell inner membrane. The enzyme catalyses cadaverine(in) + L-lysine(out) = cadaverine(out) + L-lysine(in). Functionally, under acidic conditions, in the presence of lysine, functions as a cadaverine:lysine antiporter that facilitates the excretion of cadaverine and the uptake of lysine. The chain is Cadaverine/lysine antiporter (cadB) from Escherichia coli O157:H7.